We begin with the raw amino-acid sequence, 728 residues long: Probable subtilase-type serine protease DR_A0283 (728 aa).

The first 22 residues, 1–22 (MPGALPMKKISLAVLSLTTLLA), serve as a signal peptide directing secretion. A propeptide spanning residues 23–148 (ACGQPQTSPQ…RTAQDQLGAQ (126 aa)) is cleaved from the precursor. In terms of domain architecture, Peptidase S8 spans 159–471 (QYALDSNHLH…YGLIRMDKLA (313 aa)). Catalysis depends on charge relay system residues Asp-188, His-242, and Ser-412.

It belongs to the peptidase S8 family.

It is found in the secreted. This chain is Probable subtilase-type serine protease DR_A0283, found in Deinococcus radiodurans (strain ATCC 13939 / DSM 20539 / JCM 16871 / CCUG 27074 / LMG 4051 / NBRC 15346 / NCIMB 9279 / VKM B-1422 / R1).